Here is a 39-residue protein sequence, read N- to C-terminus: Non-specific lipid-transfer protein (39 aa).

The protein belongs to the plant LTP family.

Its function is as follows. Plant non-specific lipid-transfer proteins transfer phospholipids as well as galactolipids across membranes. May play a role in wax or cutin deposition in the cell walls of expanding epidermal cells and certain secretory tissues. The polypeptide is Non-specific lipid-transfer protein (Musa acuminata (Banana)).